The primary structure comprises 365 residues: Eukaryotic translation initiation factor 3 subunit H (365 aa).

Residues 11–160 (VKVDALVVMK…LRAFRLSSKF (150 aa)) form the MPN domain.

This sequence belongs to the eIF-3 subunit H family. Component of the eukaryotic translation initiation factor 3 (eIF-3) complex.

It is found in the cytoplasm. Component of the eukaryotic translation initiation factor 3 (eIF-3) complex, which is involved in protein synthesis of a specialized repertoire of mRNAs and, together with other initiation factors, stimulates binding of mRNA and methionyl-tRNAi to the 40S ribosome. The eIF-3 complex specifically targets and initiates translation of a subset of mRNAs involved in cell proliferation. The sequence is that of Eukaryotic translation initiation factor 3 subunit H from Aspergillus oryzae (strain ATCC 42149 / RIB 40) (Yellow koji mold).